A 336-amino-acid polypeptide reads, in one-letter code: NADH-quinone oxidoreductase subunit H (336 aa).

The next 8 membrane-spanning stretches (helical) occupy residues 14–34, 82–102, 115–135, 161–181, 186–206, 247–267, 273–293, and 312–332; these read IIVA…AFLV, IIFL…WAVI, VGIL…IMAG, IGLV…SDVV, TVWF…SALA, ILMS…PLDV, VPGP…FVWV, and VFLP…VTFD.

This sequence belongs to the complex I subunit 1 family. As to quaternary structure, NDH-1 is composed of 14 different subunits. Subunits NuoA, H, J, K, L, M, N constitute the membrane sector of the complex.

The protein resides in the cell inner membrane. It carries out the reaction a quinone + NADH + 5 H(+)(in) = a quinol + NAD(+) + 4 H(+)(out). Its function is as follows. NDH-1 shuttles electrons from NADH, via FMN and iron-sulfur (Fe-S) centers, to quinones in the respiratory chain. The immediate electron acceptor for the enzyme in this species is believed to be ubiquinone. Couples the redox reaction to proton translocation (for every two electrons transferred, four hydrogen ions are translocated across the cytoplasmic membrane), and thus conserves the redox energy in a proton gradient. This subunit may bind ubiquinone. This chain is NADH-quinone oxidoreductase subunit H, found in Rhodospirillum centenum (strain ATCC 51521 / SW).